Here is a 484-residue protein sequence, read N- to C-terminus: Mitochondrial metal transporter 2 (484 aa).

The transit peptide at 1–56 (MLRISIDSIKQFGSFVPGYNNTSYHAAGRAIRTSSLYSTMISANPRRCLHSSKLLN) directs the protein to the mitochondrion. Positions 73–82 (SSQNGSNSRQ) are enriched in polar residues. The segment at 73-114 (SSQNGSNSRQNESEGKKEGKASSVKSLLQHTHSHSHTHMHDN) is disordered. Basic and acidic residues predominate over residues 83 to 92 (NESEGKKEGK). 5 consecutive transmembrane segments (helical) span residues 132 to 152 (ITWI…VGGI), 158 to 178 (ALLA…LTLF), 209 to 229 (ILAM…VGPV), 256 to 276 (ATNV…EWVF), and 316 to 336 (YFFN…GLII). The segment at 453–484 (DSKGDLEHSHDTKSTNHTHTHSDSADTHTHKH) is disordered.

Belongs to the cation diffusion facilitator (CDF) transporter (TC 2.A.4) family. SLC30A subfamily.

It localises to the mitochondrion membrane. Mitochondrial metal transporter involved in mitochondrial iron accumulation. This is Mitochondrial metal transporter 2 (MMT2) from Saccharomyces cerevisiae (strain ATCC 204508 / S288c) (Baker's yeast).